We begin with the raw amino-acid sequence, 431 residues long: Serine--tRNA ligase (431 aa).

Residue 237–239 (TAE) coordinates L-serine. An ATP-binding site is contributed by 268 to 270 (RSE). Glu-291 is an L-serine binding site. 355–358 (EISS) is an ATP binding site. Residue Ser-390 coordinates L-serine.

Belongs to the class-II aminoacyl-tRNA synthetase family. Type-1 seryl-tRNA synthetase subfamily. Homodimer. The tRNA molecule binds across the dimer.

It localises to the cytoplasm. It carries out the reaction tRNA(Ser) + L-serine + ATP = L-seryl-tRNA(Ser) + AMP + diphosphate + H(+). It catalyses the reaction tRNA(Sec) + L-serine + ATP = L-seryl-tRNA(Sec) + AMP + diphosphate + H(+). The protein operates within aminoacyl-tRNA biosynthesis; selenocysteinyl-tRNA(Sec) biosynthesis; L-seryl-tRNA(Sec) from L-serine and tRNA(Sec): step 1/1. Functionally, catalyzes the attachment of serine to tRNA(Ser). Is also able to aminoacylate tRNA(Sec) with serine, to form the misacylated tRNA L-seryl-tRNA(Sec), which will be further converted into selenocysteinyl-tRNA(Sec). This chain is Serine--tRNA ligase, found in Neisseria meningitidis serogroup A / serotype 4A (strain DSM 15465 / Z2491).